We begin with the raw amino-acid sequence, 56 residues long: Conotoxin Cal6.41c (56 aa).

An N-terminal signal peptide occupies residues 1 to 23; that stretch reads MSGSGAMLLGLLILVAMATSLDT. Cystine bridges form between Cys-27–Cys-41, Cys-33–Cys-50, and Cys-40–Cys-54.

In terms of tissue distribution, expressed by the venom duct.

It localises to the secreted. In terms of biological role, probable neurotoxin. This Californiconus californicus (California cone) protein is Conotoxin Cal6.41c.